Consider the following 200-residue polypeptide: Molybdenum cofactor guanylyltransferase (200 aa).

Residues 10-12, lysine 23, asparagine 51, aspartate 69, and aspartate 99 each bind GTP; that span reads LAG. Position 99 (aspartate 99) interacts with Mg(2+).

The protein belongs to the MobA family. In terms of assembly, monomer. It depends on Mg(2+) as a cofactor.

The protein resides in the cytoplasm. It catalyses the reaction Mo-molybdopterin + GTP + H(+) = Mo-molybdopterin guanine dinucleotide + diphosphate. Functionally, transfers a GMP moiety from GTP to Mo-molybdopterin (Mo-MPT) cofactor (Moco or molybdenum cofactor) to form Mo-molybdopterin guanine dinucleotide (Mo-MGD) cofactor. This is Molybdenum cofactor guanylyltransferase from Shewanella pealeana (strain ATCC 700345 / ANG-SQ1).